Reading from the N-terminus, the 464-residue chain is Phospho-2-dehydro-3-deoxyheptonate aldolase AroG (464 aa).

Cysteine 87 serves as a coordination point for Mn(2+). Residues arginine 126, 285-286 (ER), lysine 308, and arginine 339 contribute to the phosphoenolpyruvate site. Mn(2+) is bound by residues histidine 371, glutamate 413, and aspartate 443.

The protein belongs to the class-II DAHP synthase family. In terms of assembly, homodimer. Probably interacts with MSMEG_5536. It depends on Mn(2+) as a cofactor. The cofactor is Co(2+). Cd(2+) is required as a cofactor.

The enzyme catalyses D-erythrose 4-phosphate + phosphoenolpyruvate + H2O = 7-phospho-2-dehydro-3-deoxy-D-arabino-heptonate + phosphate. It functions in the pathway metabolic intermediate biosynthesis; chorismate biosynthesis; chorismate from D-erythrose 4-phosphate and phosphoenolpyruvate: step 1/7. Its function is as follows. Catalyzes an aldol-like condensation reaction between phosphoenolpyruvate (PEP) and D-erythrose 4-phosphate (E4P) to generate 3-deoxy-D-arabino-heptulosonate 7-phosphate (DAH7P) and inorganic phosphate. The polypeptide is Phospho-2-dehydro-3-deoxyheptonate aldolase AroG (aroG) (Mycolicibacterium smegmatis (strain ATCC 700084 / mc(2)155) (Mycobacterium smegmatis)).